The chain runs to 392 residues: Dual-specificity RNA methyltransferase RlmN (392 aa).

The active-site Proton acceptor is Glu116. One can recognise a Radical SAM core domain in the interval Glu122–Asp364. An intrachain disulfide couples Cys129 to Cys369. [4Fe-4S] cluster contacts are provided by Cys136, Cys140, and Cys143. S-adenosyl-L-methionine-binding positions include Gly195 to Glu196, Ser227, Ser249 to His251, and Asn326. Cys369 functions as the S-methylcysteine intermediate in the catalytic mechanism.

The protein belongs to the radical SAM superfamily. RlmN family. Requires [4Fe-4S] cluster as cofactor.

The protein resides in the cytoplasm. The enzyme catalyses adenosine(2503) in 23S rRNA + 2 reduced [2Fe-2S]-[ferredoxin] + 2 S-adenosyl-L-methionine = 2-methyladenosine(2503) in 23S rRNA + 5'-deoxyadenosine + L-methionine + 2 oxidized [2Fe-2S]-[ferredoxin] + S-adenosyl-L-homocysteine. The catalysed reaction is adenosine(37) in tRNA + 2 reduced [2Fe-2S]-[ferredoxin] + 2 S-adenosyl-L-methionine = 2-methyladenosine(37) in tRNA + 5'-deoxyadenosine + L-methionine + 2 oxidized [2Fe-2S]-[ferredoxin] + S-adenosyl-L-homocysteine. In terms of biological role, specifically methylates position 2 of adenine 2503 in 23S rRNA and position 2 of adenine 37 in tRNAs. m2A2503 modification seems to play a crucial role in the proofreading step occurring at the peptidyl transferase center and thus would serve to optimize ribosomal fidelity. The polypeptide is Dual-specificity RNA methyltransferase RlmN (Cereibacter sphaeroides (strain ATCC 17025 / ATH 2.4.3) (Rhodobacter sphaeroides)).